Consider the following 1261-residue polypeptide: Myosin-1 (1261 aa).

The segment at 1-39 is disordered; sequence MGHSRRPVGGEKKSRGFGRSKVADVGDGRQAGKPQVKKA. The Myosin motor domain occupies 49–728; it reads IGVSDLTLLS…TLFALEAMRD (680 aa). ATP is bound at residue 142–149; sequence GESGAGKT. Serine 370 carries the post-translational modification Phosphoserine. Positions 417-499 are actin-binding; sequence SIGILDIYGF…PGVFAALNDA (83 aa). IQ domains follow at residues 732-752 and 753-778; these read HNMA…RIEC and AIRI…QGHQ. A TH1 domain is found at 786-973; the sequence is RRRMSLLGSR…KSHTIHTSPG (188 aa). Disordered stretches follow at residues 956–1093 and 1139–1261; these read ASPN…KALY and YLEE…DDEW. 4 stretches are compositionally biased toward pro residues: residues 1019-1029, 1038-1052, 1072-1084, and 1147-1159; these read RPTPKPQPLPQ, IPAP…PVPQ, APPP…PPAP, and TPKP…PPAA. An SH3 domain is found at 1084–1145; the sequence is PKKATAKALY…PQAYLEEQVA (62 aa). Residues 1160–1181 show a composition bias toward low complexity; the sequence is PRASPVPSANGAAATAAAAKAK. Residues 1212–1233 show a composition bias toward polar residues; it reads VSMNSQDSSGGSGRGTPNSTSN. The span at 1234–1243 shows a compositional bias: low complexity; the sequence is ASLAGGLAEA.

It belongs to the TRAFAC class myosin-kinesin ATPase superfamily. Myosin family. Post-translationally, phosphorylation of the TEDS site (Ser-370) is required for the polarization of the actin cytoskeleton. Phosphorylation probably activates the myosin-I ATPase activity.

It localises to the cytoplasm. The protein resides in the cytoskeleton. The protein localises to the actin patch. Type-I myosin implicated in the organization of the actin cytoskeleton. Required for proper actin cytoskeleton polarization. At the cell cortex, assembles in patch-like structures together with proteins from the actin-polymerizing machinery and promotes actin assembly. Functions as actin nucleation-promoting factor (NPF) for the Arp2/3 complex. Plays an important role in polarized growth, spore germination, hyphal morphogenesis, and septal wall formation. This chain is Myosin-1 (myoA), found in Aspergillus oryzae (strain ATCC 42149 / RIB 40) (Yellow koji mold).